A 306-amino-acid polypeptide reads, in one-letter code: Ribosomal RNA small subunit methyltransferase H (306 aa).

Residues 33 to 35 (GGY), Asp-51, Phe-78, Asp-96, and Gln-103 contribute to the S-adenosyl-L-methionine site.

It belongs to the methyltransferase superfamily. RsmH family.

Its subcellular location is the cytoplasm. It carries out the reaction cytidine(1402) in 16S rRNA + S-adenosyl-L-methionine = N(4)-methylcytidine(1402) in 16S rRNA + S-adenosyl-L-homocysteine + H(+). Specifically methylates the N4 position of cytidine in position 1402 (C1402) of 16S rRNA. This chain is Ribosomal RNA small subunit methyltransferase H, found in Rickettsia typhi (strain ATCC VR-144 / Wilmington).